The chain runs to 339 residues: Tetraacyldisaccharide 4'-kinase (339 aa).

Position 58-65 (58-65) interacts with ATP; sequence NVGGVGKT.

It belongs to the LpxK family.

The catalysed reaction is a lipid A disaccharide + ATP = a lipid IVA + ADP + H(+). The protein operates within glycolipid biosynthesis; lipid IV(A) biosynthesis; lipid IV(A) from (3R)-3-hydroxytetradecanoyl-[acyl-carrier-protein] and UDP-N-acetyl-alpha-D-glucosamine: step 6/6. Functionally, transfers the gamma-phosphate of ATP to the 4'-position of a tetraacyldisaccharide 1-phosphate intermediate (termed DS-1-P) to form tetraacyldisaccharide 1,4'-bis-phosphate (lipid IVA). The protein is Tetraacyldisaccharide 4'-kinase of Chromobacterium violaceum (strain ATCC 12472 / DSM 30191 / JCM 1249 / CCUG 213 / NBRC 12614 / NCIMB 9131 / NCTC 9757 / MK).